Reading from the N-terminus, the 218-residue chain is MQADFWHARWANNQIGFHLDEINPYLMRHLSRLRLQAGEQILVPLCGKTLDLAWLAAQGLEVLGVELSEKAVSDFFEEHDLHPEIDQLDGFRRYRVAGITLLQGDFFALQAEHLAQCRAFYDRAALIALPPEMRERYAGHLQAVLPTRSLGLLVTIDYPQAEMAGPPFAVPDEEVRGYYAGGWRIEELERGDVLGVNWKFLERGVSWLDEAVYLLERG.

Residues Trp10, Leu45, Glu66, and Arg123 each contribute to the S-adenosyl-L-methionine site.

The protein belongs to the class I-like SAM-binding methyltransferase superfamily. TPMT family.

The protein localises to the cytoplasm. It catalyses the reaction S-adenosyl-L-methionine + a thiopurine = S-adenosyl-L-homocysteine + a thiopurine S-methylether.. In Pseudomonas aeruginosa (strain ATCC 15692 / DSM 22644 / CIP 104116 / JCM 14847 / LMG 12228 / 1C / PRS 101 / PAO1), this protein is Thiopurine S-methyltransferase.